Reading from the N-terminus, the 127-residue chain is Aspartate 1-decarboxylase (127 aa).

The Schiff-base intermediate with substrate; via pyruvic acid role is filled by serine 25. Serine 25 is modified (pyruvic acid (Ser)). Residue threonine 57 coordinates substrate. Residue tyrosine 58 is the Proton donor of the active site. 73–75 (GAA) lines the substrate pocket.

It belongs to the PanD family. As to quaternary structure, heterooctamer of four alpha and four beta subunits. The cofactor is pyruvate. Is synthesized initially as an inactive proenzyme, which is activated by self-cleavage at a specific serine bond to produce a beta-subunit with a hydroxyl group at its C-terminus and an alpha-subunit with a pyruvoyl group at its N-terminus.

Its subcellular location is the cytoplasm. It catalyses the reaction L-aspartate + H(+) = beta-alanine + CO2. It functions in the pathway cofactor biosynthesis; (R)-pantothenate biosynthesis; beta-alanine from L-aspartate: step 1/1. In terms of biological role, catalyzes the pyruvoyl-dependent decarboxylation of aspartate to produce beta-alanine. The sequence is that of Aspartate 1-decarboxylase from Neisseria meningitidis serogroup C / serotype 2a (strain ATCC 700532 / DSM 15464 / FAM18).